We begin with the raw amino-acid sequence, 161 residues long: Large ribosomal subunit protein uL10 (161 aa).

Belongs to the universal ribosomal protein uL10 family. As to quaternary structure, part of the ribosomal stalk of the 50S ribosomal subunit. The N-terminus interacts with L11 and the large rRNA to form the base of the stalk. The C-terminus forms an elongated spine to which L12 dimers bind in a sequential fashion forming a multimeric L10(L12)X complex.

Functionally, forms part of the ribosomal stalk, playing a central role in the interaction of the ribosome with GTP-bound translation factors. In Wigglesworthia glossinidia brevipalpis, this protein is Large ribosomal subunit protein uL10 (rplJ).